Here is a 95-residue protein sequence, read N- to C-terminus: Aspartyl/glutamyl-tRNA(Asn/Gln) amidotransferase subunit C (95 aa).

This sequence belongs to the GatC family. In terms of assembly, heterotrimer of A, B and C subunits.

The catalysed reaction is L-glutamyl-tRNA(Gln) + L-glutamine + ATP + H2O = L-glutaminyl-tRNA(Gln) + L-glutamate + ADP + phosphate + H(+). It carries out the reaction L-aspartyl-tRNA(Asn) + L-glutamine + ATP + H2O = L-asparaginyl-tRNA(Asn) + L-glutamate + ADP + phosphate + 2 H(+). In terms of biological role, allows the formation of correctly charged Asn-tRNA(Asn) or Gln-tRNA(Gln) through the transamidation of misacylated Asp-tRNA(Asn) or Glu-tRNA(Gln) in organisms which lack either or both of asparaginyl-tRNA or glutaminyl-tRNA synthetases. The reaction takes place in the presence of glutamine and ATP through an activated phospho-Asp-tRNA(Asn) or phospho-Glu-tRNA(Gln). The sequence is that of Aspartyl/glutamyl-tRNA(Asn/Gln) amidotransferase subunit C from Campylobacter fetus subsp. fetus (strain 82-40).